A 328-amino-acid polypeptide reads, in one-letter code: Malate dehydrogenase (328 aa).

Residue 11–17 (GAAGQIG) coordinates NAD(+). R94 and R100 together coordinate substrate. NAD(+) is bound by residues N107, Q114, and 131–133 (VGN). Substrate contacts are provided by N133 and R164. The active-site Proton acceptor is H189.

This sequence belongs to the LDH/MDH superfamily. MDH type 2 family.

It carries out the reaction (S)-malate + NAD(+) = oxaloacetate + NADH + H(+). In terms of biological role, catalyzes the reversible oxidation of malate to oxaloacetate. The protein is Malate dehydrogenase of Acinetobacter baylyi (strain ATCC 33305 / BD413 / ADP1).